Reading from the N-terminus, the 354-residue chain is Thiamine thiazole synthase 2, chloroplastic (354 aa).

The N-terminal 44 residues, 1-44 (MATTAASSLLKSSFAGSRLPSATRTTTPSSVAVATPRAGGGPIR), are a transit peptide targeting the chloroplast. Residues 17–49 (SRLPSATRTTTPSSVAVATPRAGGGPIRASISS) are disordered. The span at 20–32 (PSATRTTTPSSVA) shows a compositional bias: polar residues. Substrate-binding positions include Ala-97, 117 to 118 (EQ), Gly-125, and Val-190. At Cys-219 the chain carries 2,3-didehydroalanine (Cys). Substrate-binding positions include Asp-221, His-236, Met-288, and 298–300 (RMG).

It belongs to the THI4 family. As to quaternary structure, homooctamer. Requires Fe cation as cofactor. Post-translationally, during the catalytic reaction, a sulfide is transferred from Cys-219 to a reaction intermediate, generating a dehydroalanine residue. Highest expression in developing embryos and green leaves and a very low level expression seen in endosperm, roots, etiolated shoots and immature ears.

Its subcellular location is the plastid. It localises to the chloroplast. It catalyses the reaction [ADP-thiazole synthase]-L-cysteine + glycine + NAD(+) = [ADP-thiazole synthase]-dehydroalanine + ADP-5-ethyl-4-methylthiazole-2-carboxylate + nicotinamide + 3 H2O + 2 H(+). Its function is as follows. Involved in biosynthesis of the thiamine precursor thiazole. Catalyzes the conversion of NAD and glycine to adenosine diphosphate 5-(2-hydroxyethyl)-4-methylthiazole-2-carboxylic acid (ADT), an adenylated thiazole intermediate. The reaction includes an iron-dependent sulfide transfer from a conserved cysteine residue of the protein to a thiazole intermediate. The enzyme can only undergo a single turnover, which suggests it is a suicide enzyme. May have additional roles in adaptation to various stress conditions and in DNA damage tolerance. The sequence is that of Thiamine thiazole synthase 2, chloroplastic from Zea mays (Maize).